The chain runs to 131 residues: Holo-[acyl-carrier-protein] synthase (131 aa).

Residues Asp8 and Glu57 each contribute to the Mg(2+) site.

This sequence belongs to the P-Pant transferase superfamily. AcpS family. It depends on Mg(2+) as a cofactor.

The protein resides in the cytoplasm. The enzyme catalyses apo-[ACP] + CoA = holo-[ACP] + adenosine 3',5'-bisphosphate + H(+). Functionally, transfers the 4'-phosphopantetheine moiety from coenzyme A to a Ser of acyl-carrier-protein. The sequence is that of Holo-[acyl-carrier-protein] synthase from Thiobacillus denitrificans (strain ATCC 25259 / T1).